The chain runs to 840 residues: Microcephalin (840 aa).

Positions 1-93 (MAAHILKDVV…AHIDESLFPA (93 aa)) constitute a BRCT 1 domain. The interval 184 to 206 (KEKRENLSPSSSQMIQQSHDNPS) is disordered. Residues 190–206 (LSPSSSQMIQQSHDNPS) are compositionally biased toward polar residues. Phosphoserine is present on residues Ser-279, Ser-287, Ser-296, and Ser-333. 2 disordered regions span residues 313–379 (PDQK…SIRR) and 418–437 (PDNL…QLPS). Thr-335 bears the Phosphothreonine mark. Residues 355–378 (KRQRVSHGSHSPSKGKSKRKRSIR) show a composition bias toward basic residues. A compositionally biased stretch (polar residues) spans 427–437 (ENLPPTSQLPS). Ser-552 is modified (phosphoserine). The tract at residues 562 to 586 (LKSTQNKGTTSKISNSSEGEAQSEH) is disordered. The span at 563–581 (KSTQNKGTTSKISNSSEGE) shows a compositional bias: polar residues. 2 BRCT domains span residues 644–734 (SGRG…PFEL) and 755–837 (YRGT…NYLL).

In terms of assembly, interacts with CDC27 and maybe other components of the APC/C complex. Interacts with histone variant H2AX under DNA damage conditions.

It is found in the cytoplasm. The protein resides in the cytoskeleton. The protein localises to the microtubule organizing center. Its subcellular location is the centrosome. In terms of biological role, implicated in chromosome condensation and DNA damage induced cellular responses. May play a role in neurogenesis and regulation of the size of the cerebral cortex. The protein is Microcephalin of Hylobates lar (Lar gibbon).